The primary structure comprises 1192 residues: Probable ATP-dependent RNA helicase kurz (1192 aa).

Positions 170 to 214 are disordered; it reads ELQAKRKNPNVISVEEDDEDSSSSDEDDEEAPAQSAPIAIPTPVS. The span at 183–200 shows a compositional bias: acidic residues; that stretch reads VEEDDEDSSSSDEDDEEA. The Helicase ATP-binding domain maps to 270–436; that stretch reads METINENPIV…TRLFKIPPPL (167 aa). An ATP-binding site is contributed by 283-290; sequence GETGSGKT. The DEAH box motif lies at 379 to 382; it reads DEAH. The tract at residues 504-529 is disordered; sequence APTKDVAKNGKVSEEEKEETIDDAAS. Positions 505–517 are enriched in basic and acidic residues; it reads PTKDVAKNGKVSE. Position 529 is a phosphoserine (Ser-529). Position 530 is a phosphothreonine (Thr-530). Residues 540 to 746 enclose the Helicase C-terminal domain; the sequence is DMKRVIRNIR…DLMLQMRCMG (207 aa). Positions 567 to 583 are enriched in basic and acidic residues; it reads DDYKLPGDDTEADMHEQ. The segment at 567 to 612 is disordered; it reads DDYKLPGDDTEADMHEQPDEDDEQEGLEEDNDDELGLEDESGMGSG. The span at 584-607 shows a compositional bias: acidic residues; that stretch reads PDEDDEQEGLEEDNDDELGLEDES.

The protein belongs to the DEAD box helicase family. DEAH subfamily.

It catalyses the reaction ATP + H2O = ADP + phosphate + H(+). The polypeptide is Probable ATP-dependent RNA helicase kurz (kz) (Drosophila melanogaster (Fruit fly)).